The chain runs to 352 residues: Photosystem II D2 protein (352 aa).

The residue at position 2 (Thr2) is an N-acetylthreonine. Thr2 carries the phosphothreonine modification. A helical transmembrane segment spans residues 40-60 (TAYLALGGWLTGTTFVTSWYT). His117 is a binding site for chlorophyll a. The chain crosses the membrane as a helical span at residues 124-140 (GFMLRQFEIARSVKLRP). The pheophytin a site is built by Gln129 and Asn142. The chain crosses the membrane as a helical span at residues 152-165 (VFVSVFLIYPLGQS). Residue His197 coordinates chlorophyll a. The chain crosses the membrane as a helical span at residues 207–227 (AALLCAIHGATVENTLFEDGD). The a plastoquinone site is built by His214 and Phe261. Residue His214 coordinates Fe cation. His268 contacts Fe cation. Residues 278–294 (GLWMSALGVVGLALNLR) form a helical membrane-spanning segment.

The protein belongs to the reaction center PufL/M/PsbA/D family. In terms of assembly, PSII is composed of 1 copy each of membrane proteins PsbA, PsbB, PsbC, PsbD, PsbE, PsbF, PsbH, PsbI, PsbJ, PsbK, PsbL, PsbM, PsbT, PsbX, PsbY, PsbZ, Psb30/Ycf12, at least 3 peripheral proteins of the oxygen-evolving complex and a large number of cofactors. It forms dimeric complexes. It depends on The D1/D2 heterodimer binds P680, chlorophylls that are the primary electron donor of PSII, and subsequent electron acceptors. It shares a non-heme iron and each subunit binds pheophytin, quinone, additional chlorophylls, carotenoids and lipids. There is also a Cl(-1) ion associated with D1 and D2, which is required for oxygen evolution. The PSII complex binds additional chlorophylls, carotenoids and specific lipids. as a cofactor.

The protein resides in the plastid. Its subcellular location is the chloroplast thylakoid membrane. The catalysed reaction is 2 a plastoquinone + 4 hnu + 2 H2O = 2 a plastoquinol + O2. Photosystem II (PSII) is a light-driven water:plastoquinone oxidoreductase that uses light energy to abstract electrons from H(2)O, generating O(2) and a proton gradient subsequently used for ATP formation. It consists of a core antenna complex that captures photons, and an electron transfer chain that converts photonic excitation into a charge separation. The D1/D2 (PsbA/PsbD) reaction center heterodimer binds P680, the primary electron donor of PSII as well as several subsequent electron acceptors. D2 is needed for assembly of a stable PSII complex. This Pleurastrum terricola (Filamentous green alga) protein is Photosystem II D2 protein.